Reading from the N-terminus, the 469-residue chain is UDP-N-acetylmuramate--L-alanine ligase (469 aa).

ATP is bound at residue 114–120; that stretch reads GTHGKTT.

This sequence belongs to the MurCDEF family.

It is found in the cytoplasm. The catalysed reaction is UDP-N-acetyl-alpha-D-muramate + L-alanine + ATP = UDP-N-acetyl-alpha-D-muramoyl-L-alanine + ADP + phosphate + H(+). The protein operates within cell wall biogenesis; peptidoglycan biosynthesis. In terms of biological role, cell wall formation. In Chlorobium phaeovibrioides (strain DSM 265 / 1930) (Prosthecochloris vibrioformis (strain DSM 265)), this protein is UDP-N-acetylmuramate--L-alanine ligase.